We begin with the raw amino-acid sequence, 305 residues long: uncharacterized protein (305 aa).

10 helical membrane-spanning segments follow: residues 11–31 (LLLA…KAAL), 37–57 (LLFA…VALP), 70–90 (IYLV…TIGL), 97–117 (LFSA…WLWL), 126–146 (VIGL…GFGG), 148–168 (ISVI…LGTV), 180–200 (IWMV…SGFW), 217–237 (LLFI…TLVG), 244–264 (VASY…IFLH), and 265–285 (EPLT…ICLV). 2 consecutive EamA domains span residues 18 to 141 (IMWG…VISA) and 161 to 287 (VSWA…LVNT).

It belongs to the EamA transporter family.

The protein localises to the cell membrane. This is an uncharacterized protein from Bacillus subtilis (strain 168).